The chain runs to 168 residues: RNA pyrophosphohydrolase (168 aa).

Positions P8–R160 constitute a Nudix hydrolase domain. The short motif at G47–S68 is the Nudix box element.

Belongs to the Nudix hydrolase family. RppH subfamily. A divalent metal cation serves as cofactor.

Accelerates the degradation of transcripts by removing pyrophosphate from the 5'-end of triphosphorylated RNA, leading to a more labile monophosphorylated state that can stimulate subsequent ribonuclease cleavage. This chain is RNA pyrophosphohydrolase, found in Azorhizobium caulinodans (strain ATCC 43989 / DSM 5975 / JCM 20966 / LMG 6465 / NBRC 14845 / NCIMB 13405 / ORS 571).